Reading from the N-terminus, the 237-residue chain is Large ribosomal subunit protein uL3 (237 aa).

2 disordered regions span residues 133–155 (ASHG…DPGK) and 213–237 (PENA…EGAE). Positions 135-150 (HGNSITHRSHGSTGQR) are enriched in polar residues. An N5-methylglutamine modification is found at glutamine 151. The segment covering 220-237 (AGLRAGAKAEAAATEGAE) has biased composition (low complexity).

The protein belongs to the universal ribosomal protein uL3 family. In terms of assembly, part of the 50S ribosomal subunit. Forms a cluster with proteins L14 and L19. In terms of processing, methylated by PrmB.

In terms of biological role, one of the primary rRNA binding proteins, it binds directly near the 3'-end of the 23S rRNA, where it nucleates assembly of the 50S subunit. The protein is Large ribosomal subunit protein uL3 of Brucella suis biovar 1 (strain 1330).